A 413-amino-acid polypeptide reads, in one-letter code: Serine hydroxymethyltransferase (413 aa).

(6S)-5,6,7,8-tetrahydrofolate-binding positions include Leu119 and 123 to 125; that span reads GHL. Lys228 is subject to N6-(pyridoxal phosphate)lysine. 351-353 is a (6S)-5,6,7,8-tetrahydrofolate binding site; it reads SPF.

Belongs to the SHMT family. In terms of assembly, homodimer. Requires pyridoxal 5'-phosphate as cofactor.

The protein localises to the cytoplasm. It catalyses the reaction (6R)-5,10-methylene-5,6,7,8-tetrahydrofolate + glycine + H2O = (6S)-5,6,7,8-tetrahydrofolate + L-serine. It functions in the pathway one-carbon metabolism; tetrahydrofolate interconversion. Its pathway is amino-acid biosynthesis; glycine biosynthesis; glycine from L-serine: step 1/1. Its function is as follows. Catalyzes the reversible interconversion of serine and glycine with tetrahydrofolate (THF) serving as the one-carbon carrier. This reaction serves as the major source of one-carbon groups required for the biosynthesis of purines, thymidylate, methionine, and other important biomolecules. Also exhibits THF-independent aldolase activity toward beta-hydroxyamino acids, producing glycine and aldehydes, via a retro-aldol mechanism. In Clostridium botulinum (strain 657 / Type Ba4), this protein is Serine hydroxymethyltransferase.